A 191-amino-acid polypeptide reads, in one-letter code: Small ribosomal subunit protein uS9c (191 aa).

The tract at residues 166–191 is disordered; that stretch reads TQDSRVKERRKYGLKKARKASQYHKR. Over residues 172–191 the composition is skewed to basic residues; the sequence is KERRKYGLKKARKASQYHKR.

This sequence belongs to the universal ribosomal protein uS9 family.

It localises to the plastid. Its subcellular location is the chloroplast. The sequence is that of Small ribosomal subunit protein uS9c (rps9) from Chlamydomonas reinhardtii (Chlamydomonas smithii).